We begin with the raw amino-acid sequence, 257 residues long: Hydroxyacylglutathione hydrolase (257 aa).

Zn(2+) contacts are provided by histidine 54, histidine 56, aspartate 58, histidine 59, histidine 113, aspartate 137, and histidine 175.

This sequence belongs to the metallo-beta-lactamase superfamily. Glyoxalase II family. In terms of assembly, monomer. Zn(2+) serves as cofactor.

It carries out the reaction an S-(2-hydroxyacyl)glutathione + H2O = a 2-hydroxy carboxylate + glutathione + H(+). Its pathway is secondary metabolite metabolism; methylglyoxal degradation; (R)-lactate from methylglyoxal: step 2/2. In terms of biological role, thiolesterase that catalyzes the hydrolysis of S-D-lactoyl-glutathione to form glutathione and D-lactic acid. The protein is Hydroxyacylglutathione hydrolase of Nostoc sp. (strain PCC 7120 / SAG 25.82 / UTEX 2576).